Consider the following 698-residue polypeptide: Elongation factor G (698 aa).

The tr-type G domain maps to 8–290 (ERYRNIGISA…AVIEFLPSPV (283 aa)). GTP-binding positions include 17–24 (AHIDAGKT), 88–92 (DTPGH), and 142–145 (NKMD).

It belongs to the TRAFAC class translation factor GTPase superfamily. Classic translation factor GTPase family. EF-G/EF-2 subfamily.

Its subcellular location is the cytoplasm. In terms of biological role, catalyzes the GTP-dependent ribosomal translocation step during translation elongation. During this step, the ribosome changes from the pre-translocational (PRE) to the post-translocational (POST) state as the newly formed A-site-bound peptidyl-tRNA and P-site-bound deacylated tRNA move to the P and E sites, respectively. Catalyzes the coordinated movement of the two tRNA molecules, the mRNA and conformational changes in the ribosome. The sequence is that of Elongation factor G from Azoarcus sp. (strain BH72).